A 201-amino-acid polypeptide reads, in one-letter code: Ras-related protein Ral-a (201 aa).

18–25 lines the GTP pocket; that stretch reads GSGGVGKS. The Effector region motif lies at 40–48; sequence YEPTKADSY. GTP is bound by residues 65–69 and 124–127; these read DTAGQ and NKCD. C198 carries the post-translational modification Cysteine methyl ester. A lipid anchor (S-geranylgeranyl cysteine) is attached at C198. Positions 199–201 are cleaved as a propeptide — removed in mature form; sequence TLL.

The protein belongs to the small GTPase superfamily. Ras family.

The protein resides in the cell membrane. It localises to the cleavage furrow. Its subcellular location is the midbody. It is found in the midbody ring. The enzyme catalyses GTP + H2O = GDP + phosphate + H(+). This chain is Ras-related protein Ral-a (Rala), found in Drosophila melanogaster (Fruit fly).